The chain runs to 265 residues: Tryptophan synthase alpha chain (265 aa).

Catalysis depends on proton acceptor residues glutamate 49 and aspartate 60.

This sequence belongs to the TrpA family. In terms of assembly, tetramer of two alpha and two beta chains.

It catalyses the reaction (1S,2R)-1-C-(indol-3-yl)glycerol 3-phosphate + L-serine = D-glyceraldehyde 3-phosphate + L-tryptophan + H2O. Its pathway is amino-acid biosynthesis; L-tryptophan biosynthesis; L-tryptophan from chorismate: step 5/5. The alpha subunit is responsible for the aldol cleavage of indoleglycerol phosphate to indole and glyceraldehyde 3-phosphate. The chain is Tryptophan synthase alpha chain from Cupriavidus pinatubonensis (strain JMP 134 / LMG 1197) (Cupriavidus necator (strain JMP 134)).